The chain runs to 290 residues: Xylanase inhibitor protein 2 (290 aa).

The first 27 residues, 1 to 27 (MGLVHALLPFAAAAALLLLAAPPPATA), serve as a signal peptide directing secretion. In terms of domain architecture, GH18 spans 30 to 290 (PGLAVYWGRH…DKKANYTGEG (261 aa)). Cys49 and Cys89 form a disulfide bridge. The N-linked (GlcNAc...) asparagine glycan is linked to Asn112. Cys187 and Cys216 are disulfide-bonded. The N-linked (GlcNAc...) asparagine glycan is linked to Asn285.

It belongs to the glycosyl hydrolase 18 family. Xylanase inhibitor subfamily. Binds to fungal GH10 xylanases.

Its subcellular location is the secreted. Its function is as follows. Fungal xylanase inhibitor. Possesses competitive inhibiting activity against several fungal endo-1,4-beta-D-xylanases belonging to glycoside hydrolase family 10 (GH10) and family 11 (GH11). May function in plant defense against secreted fungal pathogen xylanases. Is similar to class III chitinases, but does not exhibit chitinase activity. The polypeptide is Xylanase inhibitor protein 2 (Oryza sativa subsp. japonica (Rice)).